Consider the following 299-residue polypeptide: MSSIKIECVLRENYRCGESPVWEEASKCLLFVDIPSKTVCRWDSISNRVQRVGVDAPVSSVALRQSGGYVATIGTKFCALNWEDQSVFILAMVDEDKKNNRFNDGKVDPAGRYFAGTMAEETAPAVLERHQGSLYSLFPDHSVKKYFDQVDISNGLDWSLDHKIFYYIDSLSYTVDAFDYDLPTGQISNRRTVYKMEKDEQIPDGMCIDVEGKLWVACYNGGRVIRLDPETGKRLQTVKLPVDKTTSCCFGGKDYSEMYVTCARDGMSAEGLLRQPDAGNIFKITGLGVKGIAPYSYAG.

An a divalent metal cation-binding site is contributed by glutamate 18. Substrate-binding residues include arginine 101, asparagine 103, and glutamate 121. Lysine 144 bears the N6-succinyllysine mark. A divalent metal cation is bound by residues asparagine 154 and aspartate 204. Aspartate 204 functions as the Proton donor/acceptor in the catalytic mechanism. An N6-succinyllysine mark is found at lysine 244 and lysine 253. Serine 268 is subject to Phosphoserine.

This sequence belongs to the SMP-30/CGR1 family. As to quaternary structure, monomer. Zn(2+) is required as a cofactor. Requires Mn(2+) as cofactor. It depends on Ca(2+) as a cofactor. The cofactor is Mg(2+). Co(2+) serves as cofactor. Post-translationally, the N-terminus is blocked. Detected in liver (at protein level). Hepatocytes and renal proximal tubular epithelium.

The protein resides in the cytoplasm. It catalyses the reaction D-glucono-1,5-lactone + H2O = D-gluconate + H(+). The protein operates within cofactor biosynthesis; L-ascorbate biosynthesis via UDP-alpha-D-glucuronate pathway; L-ascorbate from UDP-alpha-D-glucuronate: step 3/4. In terms of biological role, gluconolactonase with low activity towards other sugar lactones, including gulonolactone and galactonolactone. Catalyzes a key step in ascorbic acid (vitamin C) biosynthesis. Can also hydrolyze diisopropyl phosphorofluoridate and phenylacetate (in vitro). Calcium-binding protein. Modulates Ca(2+) signaling, and Ca(2+)-dependent cellular processes and enzyme activities. This chain is Regucalcin (Rgn), found in Rattus norvegicus (Rat).